We begin with the raw amino-acid sequence, 629 residues long: tRNA uridine 5-carboxymethylaminomethyl modification enzyme MnmG (629 aa).

13 to 18 (GGGHAG) provides a ligand contact to FAD. An NAD(+)-binding site is contributed by 273-287 (GPRYCPSIEDKVVRF).

This sequence belongs to the MnmG family. Homodimer. Heterotetramer of two MnmE and two MnmG subunits. The cofactor is FAD.

It localises to the cytoplasm. Its function is as follows. NAD-binding protein involved in the addition of a carboxymethylaminomethyl (cmnm) group at the wobble position (U34) of certain tRNAs, forming tRNA-cmnm(5)s(2)U34. The protein is tRNA uridine 5-carboxymethylaminomethyl modification enzyme MnmG of Alkalilimnicola ehrlichii (strain ATCC BAA-1101 / DSM 17681 / MLHE-1).